The sequence spans 168 residues: N-alpha-acetyltransferase (168 aa).

One can recognise an N-acetyltransferase domain in the interval 13 to 168 (YQIRLATLSD…EDAYLMAAPL (156 aa)). Y38 is a binding site for substrate. H89 provides a ligand contact to Zn(2+). Acetyl-CoA-binding positions include 93–95 (IAV) and 101–106 (KIGVGT). CoA is bound by residues 93–95 (IAV) and 101–106 (KIGVGT). E128 provides a ligand contact to Zn(2+). Acetyl-CoA contacts are provided by residues N133 and 140 to 142 (YKK). N133 contributes to the CoA binding site. A substrate-binding site is contributed by Y155.

It belongs to the acetyltransferase family. ARD1 subfamily. Homodimer.

The protein resides in the cytoplasm. It carries out the reaction N-terminal L-alanyl-[protein] + acetyl-CoA = N-terminal N(alpha)-acetyl-L-alanyl-[protein] + CoA + H(+). The catalysed reaction is N-terminal L-seryl-[protein] + acetyl-CoA = N-terminal N(alpha)-acetyl-L-seryl-[protein] + CoA + H(+). The enzyme catalyses N-terminal L-methionyl-L-leucyl-[protein] + acetyl-CoA = N-terminal N(alpha)-acetyl-L-methionyl-L-leucyl-[protein] + CoA + H(+). It catalyses the reaction N-terminal L-methionyl-L-glutamyl-[protein] + acetyl-CoA = N-terminal N(alpha)-acetyl-L-methionyl-L-glutamyl-[protein] + CoA + H(+). Displays alpha (N-terminal) acetyltransferase activity. Catalyzes the covalent attachment of an acetyl moiety from acetyl-CoA to the free alpha-amino group at the N-terminus of a protein. The protein is N-alpha-acetyltransferase of Sulfolobus acidocaldarius (strain ATCC 33909 / DSM 639 / JCM 8929 / NBRC 15157 / NCIMB 11770).